The primary structure comprises 450 residues: tRNA-2-methylthio-N(6)-dimethylallyladenosine synthase (450 aa).

The MTTase N-terminal domain occupies 17 to 131 (KKFFVKTYGC…LNHVLDEVLA (115 aa)). 6 residues coordinate [4Fe-4S] cluster: Cys26, Cys62, Cys94, Cys168, Cys172, and Cys175. A Radical SAM core domain is found at 154 to 385 (REDQIKAYVS…LQLQDTIYMK (232 aa)). In terms of domain architecture, TRAM spans 388 to 450 (QAFLGQTVEV…SHQTLLGDLQ (63 aa)).

The protein belongs to the methylthiotransferase family. MiaB subfamily. In terms of assembly, monomer. [4Fe-4S] cluster is required as a cofactor.

The protein resides in the cytoplasm. It carries out the reaction N(6)-dimethylallyladenosine(37) in tRNA + (sulfur carrier)-SH + AH2 + 2 S-adenosyl-L-methionine = 2-methylsulfanyl-N(6)-dimethylallyladenosine(37) in tRNA + (sulfur carrier)-H + 5'-deoxyadenosine + L-methionine + A + S-adenosyl-L-homocysteine + 2 H(+). In terms of biological role, catalyzes the methylthiolation of N6-(dimethylallyl)adenosine (i(6)A), leading to the formation of 2-methylthio-N6-(dimethylallyl)adenosine (ms(2)i(6)A) at position 37 in tRNAs that read codons beginning with uridine. This Protochlamydia amoebophila (strain UWE25) protein is tRNA-2-methylthio-N(6)-dimethylallyladenosine synthase.